We begin with the raw amino-acid sequence, 513 residues long: Bifunctional purine biosynthesis protein PurH (513 aa).

The region spanning 1–147 (MIQIKRALVS…KNHKNVVVLT (147 aa)) is the MGS-like domain.

The protein belongs to the PurH family.

It carries out the reaction (6R)-10-formyltetrahydrofolate + 5-amino-1-(5-phospho-beta-D-ribosyl)imidazole-4-carboxamide = 5-formamido-1-(5-phospho-D-ribosyl)imidazole-4-carboxamide + (6S)-5,6,7,8-tetrahydrofolate. It catalyses the reaction IMP + H2O = 5-formamido-1-(5-phospho-D-ribosyl)imidazole-4-carboxamide. It functions in the pathway purine metabolism; IMP biosynthesis via de novo pathway; 5-formamido-1-(5-phospho-D-ribosyl)imidazole-4-carboxamide from 5-amino-1-(5-phospho-D-ribosyl)imidazole-4-carboxamide (10-formyl THF route): step 1/1. It participates in purine metabolism; IMP biosynthesis via de novo pathway; IMP from 5-formamido-1-(5-phospho-D-ribosyl)imidazole-4-carboxamide: step 1/1. This chain is Bifunctional purine biosynthesis protein PurH, found in Leptospira biflexa serovar Patoc (strain Patoc 1 / Ames).